The following is a 586-amino-acid chain: GRB2-associated-binding protein 3 (586 aa).

In terms of domain architecture, PH spans 5 to 117 (DAVCTGWLVK…WVHSISQVCN (113 aa)). Disordered stretches follow at residues 149–171 (AHAA…TEET) and 281–335 (SSTI…KKPE). Positions 283–292 (TIQVDKNQGS) are enriched in polar residues. Positions 316–326 (HLSERRQEEWS) are enriched in basic and acidic residues. S344 is modified (phosphoserine). The segment at 401-453 (GASGLGPHCSPDDYIPMNSGSISSPLPELPANLEPPPVNRDLKPQRKSRPPPL) is disordered. Residue S482 is modified to Phosphoserine.

This sequence belongs to the GAB family. In terms of assembly, interacts with PIK3R/p85, SHP2 and GRAP2/MONA. May interact with Grb2. In terms of processing, phosphorylated on tyrosine residue(s) after macrophage colony-stimulating factor (M-CSF) receptor stimulation.

The chain is GRB2-associated-binding protein 3 (GAB3) from Homo sapiens (Human).